Consider the following 431-residue polypeptide: Glucose-1-phosphate adenylyltransferase (431 aa).

Lysine 39 is a beta-D-fructose 1,6-bisphosphate binding site. AMP contacts are provided by arginine 40, histidine 46, and arginine 52. Tyrosine 114 contributes to the alpha-D-glucose 1-phosphate binding site. Arginine 130 contributes to the AMP binding site. Alpha-D-glucose 1-phosphate-binding positions include glycine 179, 194-195 (EK), and serine 212. AMP contacts are provided by glutamate 370 and arginine 386. Beta-D-fructose 1,6-bisphosphate contacts are provided by residues 419–423 (REMLR) and 429–431 (QER).

The protein belongs to the bacterial/plant glucose-1-phosphate adenylyltransferase family. In terms of assembly, homotetramer.

It carries out the reaction alpha-D-glucose 1-phosphate + ATP + H(+) = ADP-alpha-D-glucose + diphosphate. It functions in the pathway glycan biosynthesis; glycogen biosynthesis. With respect to regulation, allosterically activated by fructose-1,6-bisphosphate (F16BP) and inhibited by AMP. Involved in the biosynthesis of ADP-glucose, a building block required for the elongation reactions to produce glycogen. Catalyzes the reaction between ATP and alpha-D-glucose 1-phosphate (G1P) to produce pyrophosphate and ADP-Glc. This Escherichia coli O45:K1 (strain S88 / ExPEC) protein is Glucose-1-phosphate adenylyltransferase.